The sequence spans 566 residues: Proline--tRNA ligase (566 aa).

The protein belongs to the class-II aminoacyl-tRNA synthetase family. ProS type 1 subfamily. As to quaternary structure, homodimer.

The protein localises to the cytoplasm. It catalyses the reaction tRNA(Pro) + L-proline + ATP = L-prolyl-tRNA(Pro) + AMP + diphosphate. Its function is as follows. Catalyzes the attachment of proline to tRNA(Pro) in a two-step reaction: proline is first activated by ATP to form Pro-AMP and then transferred to the acceptor end of tRNA(Pro). As ProRS can inadvertently accommodate and process non-cognate amino acids such as alanine and cysteine, to avoid such errors it has two additional distinct editing activities against alanine. One activity is designated as 'pretransfer' editing and involves the tRNA(Pro)-independent hydrolysis of activated Ala-AMP. The other activity is designated 'posttransfer' editing and involves deacylation of mischarged Ala-tRNA(Pro). The misacylated Cys-tRNA(Pro) is not edited by ProRS. The chain is Proline--tRNA ligase from Campylobacter concisus (strain 13826).